The primary structure comprises 512 residues: Glutamate--tRNA ligase (512 aa).

A 'HIGH' region motif is present at residues 11-21; that stretch reads PSPTGALHIGG. Positions 263 to 267 match the 'KMSKS' region motif; that stretch reads KLSKR. Residue Lys-266 participates in ATP binding.

This sequence belongs to the class-I aminoacyl-tRNA synthetase family. Glutamate--tRNA ligase type 1 subfamily. In terms of assembly, monomer.

Its subcellular location is the cytoplasm. The enzyme catalyses tRNA(Glu) + L-glutamate + ATP = L-glutamyl-tRNA(Glu) + AMP + diphosphate. Its function is as follows. Catalyzes the attachment of glutamate to tRNA(Glu) in a two-step reaction: glutamate is first activated by ATP to form Glu-AMP and then transferred to the acceptor end of tRNA(Glu). The protein is Glutamate--tRNA ligase of Amoebophilus asiaticus (strain 5a2).